A 37-amino-acid polypeptide reads, in one-letter code: Large ribosomal subunit protein bL36 (37 aa).

The protein belongs to the bacterial ribosomal protein bL36 family.

The chain is Large ribosomal subunit protein bL36 from Caldanaerobacter subterraneus subsp. tengcongensis (strain DSM 15242 / JCM 11007 / NBRC 100824 / MB4) (Thermoanaerobacter tengcongensis).